The following is a 351-amino-acid chain: Nicotinate-nucleotide--dimethylbenzimidazole phosphoribosyltransferase (351 aa).

The Proton acceptor role is filled by glutamate 317.

This sequence belongs to the CobT family.

It carries out the reaction 5,6-dimethylbenzimidazole + nicotinate beta-D-ribonucleotide = alpha-ribazole 5'-phosphate + nicotinate + H(+). Its pathway is nucleoside biosynthesis; alpha-ribazole biosynthesis; alpha-ribazole from 5,6-dimethylbenzimidazole: step 1/2. Its function is as follows. Catalyzes the synthesis of alpha-ribazole-5'-phosphate from nicotinate mononucleotide (NAMN) and 5,6-dimethylbenzimidazole (DMB). The chain is Nicotinate-nucleotide--dimethylbenzimidazole phosphoribosyltransferase from Pseudomonas fluorescens (strain SBW25).